A 143-amino-acid polypeptide reads, in one-letter code: EKC/KEOPS complex subunit LAGE3 (143 aa).

The interval Met-1–Arg-57 is disordered. Low complexity predominate over residues Ala-30–Gly-55.

The protein belongs to the CTAG/PCC1 family. As to quaternary structure, component of the EKC/KEOPS complex composed of at least GON7, TP53RK, TPRKB, OSGEP and LAGE3; the whole complex dimerizes. As to expression, ubiquitous.

The protein localises to the cytoplasm. Its subcellular location is the nucleus. In terms of biological role, component of the EKC/KEOPS complex that is required for the formation of a threonylcarbamoyl group on adenosine at position 37 (t(6)A37) in tRNAs that read codons beginning with adenine. The complex is probably involved in the transfer of the threonylcarbamoyl moiety of threonylcarbamoyl-AMP (TC-AMP) to the N6 group of A37. LAGE3 functions as a dimerization module for the complex. The chain is EKC/KEOPS complex subunit LAGE3 from Homo sapiens (Human).